A 424-amino-acid chain; its full sequence is Histidine--tRNA ligase (424 aa).

Belongs to the class-II aminoacyl-tRNA synthetase family. As to quaternary structure, homodimer.

The protein resides in the cytoplasm. It catalyses the reaction tRNA(His) + L-histidine + ATP = L-histidyl-tRNA(His) + AMP + diphosphate + H(+). The chain is Histidine--tRNA ligase from Shigella boydii serotype 18 (strain CDC 3083-94 / BS512).